A 149-amino-acid polypeptide reads, in one-letter code: D-aminoacyl-tRNA deacylase (149 aa).

Residues 141 to 142 carry the Gly-cisPro motif, important for rejection of L-amino acids motif; the sequence is GP.

This sequence belongs to the DTD family. Homodimer.

It is found in the cytoplasm. It carries out the reaction glycyl-tRNA(Ala) + H2O = tRNA(Ala) + glycine + H(+). It catalyses the reaction a D-aminoacyl-tRNA + H2O = a tRNA + a D-alpha-amino acid + H(+). An aminoacyl-tRNA editing enzyme that deacylates mischarged D-aminoacyl-tRNAs. Also deacylates mischarged glycyl-tRNA(Ala), protecting cells against glycine mischarging by AlaRS. Acts via tRNA-based rather than protein-based catalysis; rejects L-amino acids rather than detecting D-amino acids in the active site. By recycling D-aminoacyl-tRNA to D-amino acids and free tRNA molecules, this enzyme counteracts the toxicity associated with the formation of D-aminoacyl-tRNA entities in vivo and helps enforce protein L-homochirality. The sequence is that of D-aminoacyl-tRNA deacylase from Hydrogenovibrio crunogenus (strain DSM 25203 / XCL-2) (Thiomicrospira crunogena).